We begin with the raw amino-acid sequence, 20 residues long: YGGSQGNLIFGKGTKLSVKP.

A disordered region spans residues 1 to 20; sequence YGGSQGNLIFGKGTKLSVKP.

As to quaternary structure, alpha-beta TR is a heterodimer composed of an alpha and beta chain; disulfide-linked. The alpha-beta TR is associated with the transmembrane signaling CD3 coreceptor proteins to form the TR-CD3 (TcR or TCR). The assembly of alpha-beta TR heterodimers with CD3 occurs in the endoplasmic reticulum where a single alpha-beta TR heterodimer associates with one CD3D-CD3E heterodimer, one CD3G-CD3E heterodimer and one CD247 homodimer forming a stable octameric structure. CD3D-CD3E and CD3G-CD3E heterodimers preferentially associate with TR alpha and TR beta chains, respectively. The association of the CD247 homodimer is the last step of TcR assembly in the endoplasmic reticulum and is required for transport to the cell surface.

It localises to the cell membrane. Its function is as follows. J region of the variable domain of T cell receptor (TR) alpha chain that participates in the antigen recognition. Alpha-beta T cell receptors are antigen specific receptors which are essential to the immune response and are present on the cell surface of T lymphocytes. Recognize peptide-major histocompatibility (MH) (pMH) complexes that are displayed by antigen presenting cells (APC), a prerequisite for efficient T cell adaptive immunity against pathogens. Binding of alpha-beta TR to pMH complex initiates TR-CD3 clustering on the cell surface and intracellular activation of LCK that phosphorylates the ITAM motifs of CD3G, CD3D, CD3E and CD247 enabling the recruitment of ZAP70. In turn, ZAP70 phosphorylates LAT, which recruits numerous signaling molecules to form the LAT signalosome. The LAT signalosome propagates signal branching to three major signaling pathways, the calcium, the mitogen-activated protein kinase (MAPK) kinase and the nuclear factor NF-kappa-B (NF-kB) pathways, leading to the mobilization of transcription factors that are critical for gene expression and essential for T cell growth and differentiation. The T cell repertoire is generated in the thymus, by V-(D)-J rearrangement. This repertoire is then shaped by intrathymic selection events to generate a peripheral T cell pool of self-MH restricted, non-autoaggressive T cells. Post-thymic interaction of alpha-beta TR with the pMH complexes shapes TR structural and functional avidity. This chain is T cell receptor alpha joining 42, found in Homo sapiens (Human).